The following is an 81-amino-acid chain: Acyl carrier protein (81 aa).

In terms of domain architecture, Carrier spans 2–80; the sequence is SKVDNIEQKV…DVVNYIKEHK (79 aa). At S40 the chain carries O-(pantetheine 4'-phosphoryl)serine.

Belongs to the acyl carrier protein (ACP) family. In terms of processing, 4'-phosphopantetheine is transferred from CoA to a specific serine of apo-ACP by AcpS. This modification is essential for activity because fatty acids are bound in thioester linkage to the sulfhydryl of the prosthetic group.

The protein resides in the cytoplasm. Its pathway is lipid metabolism; fatty acid biosynthesis. In terms of biological role, carrier of the growing fatty acid chain in fatty acid biosynthesis. In Rickettsia bellii (strain OSU 85-389), this protein is Acyl carrier protein.